Reading from the N-terminus, the 265-residue chain is RING finger protein 208 (265 aa).

The segment at 83 to 106 is disordered; sequence MPTLEGASHTPPLPRRPRKGSSEL. Ser103 carries the phosphoserine modification. An RING-type zinc finger spans residues 147 to 194; it reads CPTCGHTYNVTQRRPRVLSCLHSVCEQCLQILYESCPKYKFISCPTCH.

This Mus musculus (Mouse) protein is RING finger protein 208 (Rnf208).